Here is a 1214-residue protein sequence, read N- to C-terminus: Brassinosteroid LRR receptor kinase BRL3 (1214 aa).

The N-terminal stretch at Met-1–Ala-29 is a signal peptide. The N-linked (GlcNAc...) asparagine glycan is linked to Asn-61. Positions Cys-69–Cys-76 match the Cys pair 1 motif. 22 LRR repeats span residues Leu-103–Arg-127, Pro-131–Ser-155, Cys-156–Pro-177, Pro-178–Gly-202, His-204–Glu-228, Ser-230–Met-250, Pro-252–Gly-276, Cys-277–Cys-302, Arg-303–Val-325, Leu-327–Leu-351, Lys-353–Gln-375, Arg-377–Asn-400, Ile-401–Cys-427, Leu-429–Ser-451, Leu-452–Cys-476, Asn-478–Leu-500, Lys-502–Ser-525, Thr-526–Cys-549, Val-550–Asn-572, Leu-573–Cys-597, Asn-599–Gln-621, and Gly-650–Ser-673. Residues Asn-145, Asn-163, Asn-197, and Asn-210 are each glycosylated (N-linked (GlcNAc...) asparagine). N-linked (GlcNAc...) asparagine glycans are attached at residues Asn-254, Asn-264, and Asn-279. Asn-400 and Asn-413 each carry an N-linked (GlcNAc...) asparagine glycan. A glycan (N-linked (GlcNAc...) asparagine) is linked at Asn-466. N-linked (GlcNAc...) asparagine glycosylation is found at Asn-512 and Asn-524. Asn-561 carries N-linked (GlcNAc...) asparagine glycosylation. Position 678 (Tyr-678) interacts with brassinolide. 4 LRR repeats span residues Asn-689–Asn-712, Met-713–Gly-736, Lys-738–Cys-760, and His-762–Thr-786. The Cys pair 2 motif lies at Cys-799–Cys-806. The helical transmembrane segment at Ser-829 to Tyr-849 threads the bilayer. The 284-residue stretch at Phe-913–Leu-1196 folds into the Protein kinase domain. Residues Ile-919–Val-927, Lys-941, Glu-987–Met-989, Ser-993–Phe-996, Asp-1039–Asn-1044, and Asp-1057 contribute to the ATP site. Asp-1039 acts as the Proton acceptor in catalysis.

Belongs to the protein kinase superfamily. Ser/Thr protein kinase family. In terms of tissue distribution, highly expressed in roots. Expressed at low levels in shoots.

Its subcellular location is the cell membrane. It carries out the reaction L-seryl-[protein] + ATP = O-phospho-L-seryl-[protein] + ADP + H(+). It catalyses the reaction L-threonyl-[protein] + ATP = O-phospho-L-threonyl-[protein] + ADP + H(+). Functionally, may be involved in brassenosteroid (BR) perception in roots. The sequence is that of Brassinosteroid LRR receptor kinase BRL3 from Oryza sativa subsp. japonica (Rice).